We begin with the raw amino-acid sequence, 711 residues long: Polyribonucleotide nucleotidyltransferase (711 aa).

2 residues coordinate Mg(2+): Asp486 and Asp492. Residues 553–612 (PRIHTIKISTDKIKDVIGKGGSVIRALTEETGTTIEIEDDGTVKIAATDGEKAKYAIRRI) form the KH domain. Residues 622 to 690 (GRIYNGKVTR…RQGRVRLSIK (69 aa)) form the S1 motif domain. The disordered stretch occupies residues 689–711 (IKEATEQTQPAAAPEAPTSEQGE). The segment covering 694 to 711 (EQTQPAAAPEAPTSEQGE) has biased composition (low complexity).

It belongs to the polyribonucleotide nucleotidyltransferase family. In terms of assembly, component of the RNA degradosome, which is a multiprotein complex involved in RNA processing and mRNA degradation. It depends on Mg(2+) as a cofactor.

The protein localises to the cytoplasm. The enzyme catalyses RNA(n+1) + phosphate = RNA(n) + a ribonucleoside 5'-diphosphate. In terms of biological role, involved in mRNA degradation. Catalyzes the phosphorolysis of single-stranded polyribonucleotides processively in the 3'- to 5'-direction. The sequence is that of Polyribonucleotide nucleotidyltransferase from Salmonella arizonae (strain ATCC BAA-731 / CDC346-86 / RSK2980).